Consider the following 337-residue polypeptide: DNA-directed RNA polymerase subunit alpha (337 aa).

The segment at 1 to 233 (MVREKVTVST…DLFIPFLHME (233 aa)) is alpha N-terminal domain (alpha-NTD). The alpha C-terminal domain (alpha-CTD) stretch occupies residues 265–337 (KKIALKSIFI…FVIDLAKNKF (73 aa)).

This sequence belongs to the RNA polymerase alpha chain family. As to quaternary structure, in plastids the minimal PEP RNA polymerase catalytic core is composed of four subunits: alpha, beta, beta', and beta''. When a (nuclear-encoded) sigma factor is associated with the core the holoenzyme is formed, which can initiate transcription.

The protein localises to the plastid. Its subcellular location is the chloroplast. It carries out the reaction RNA(n) + a ribonucleoside 5'-triphosphate = RNA(n+1) + diphosphate. In terms of biological role, DNA-dependent RNA polymerase catalyzes the transcription of DNA into RNA using the four ribonucleoside triphosphates as substrates. This chain is DNA-directed RNA polymerase subunit alpha, found in Nicotiana sylvestris (Wood tobacco).